Here is a 375-residue protein sequence, read N- to C-terminus: Growth/differentiation factor 8 (375 aa).

Residues 1-18 (MQRLQICVYIYLFVLIVA) form the signal peptide. A propeptide spanning residues 19–266 (GPVDLSENSE…VTDTPKRSRR (248 aa)) is cleaved from the precursor. An N-linked (GlcNAc...) asparagine glycan is attached at Asn-71. Disulfide bonds link Cys-281–Cys-340, Cys-309–Cys-372, and Cys-313–Cys-374.

It belongs to the TGF-beta family. Homodimer; disulfide-linked. Interacts with WFIKKN2, leading to inhibit its activity. Interacts with FSTL3. Synthesized as large precursor molecule that undergoes proteolytic cleavage to generate an N-terminal propeptide and a disulfide linked C-terminal dimer, which is the biologically active molecule. The circulating form consists of a latent complex of the C-terminal dimer and other proteins, including its propeptide, which maintain the C-terminal dimer in a latent, inactive state. Ligand activation requires additional cleavage of the prodomain by a tolloid-like metalloproteinase.

It is found in the secreted. Acts specifically as a negative regulator of skeletal muscle growth. This chain is Growth/differentiation factor 8 (MSTN), found in Vulpes vulpes (Red fox).